Reading from the N-terminus, the 283-residue chain is Protein FAM78A (283 aa).

This sequence belongs to the FAM78 family.

The sequence is that of Protein FAM78A (FAM78A) from Homo sapiens (Human).